A 386-amino-acid chain; its full sequence is ATP synthase gamma chain 2, chloroplastic (386 aa).

The disordered stretch occupies residues 1 to 22 (MTGSISTSWLLSSPSNSNSASS). A chloroplast-targeting transit peptide spans 1–60 (MTGSISTSWLLSSPSNSNSASSSESYSFIATLKPVRYYPFQSLTPNRISSRSPLPSIQIR). Cys-149 is an active-site residue. A disulfide bridge connects residues Cys-260 and Cys-266.

This sequence belongs to the ATPase gamma chain family. As to quaternary structure, F-type ATPases have 2 components, CF(1) - the catalytic core - and CF(0) - the membrane proton channel. CF(1) has five subunits: alpha(3), beta(3), gamma(1), delta(1), epsilon(1). CF(0) has four main subunits: a, b, b' and c.

The protein localises to the plastid. It localises to the chloroplast thylakoid membrane. Functionally, produces ATP from ADP in the presence of a proton gradient across the membrane. The gamma chain is believed to be important in regulating ATPase activity and the flow of protons through the CF(0) complex. This is ATP synthase gamma chain 2, chloroplastic (ATPC2) from Arabidopsis thaliana (Mouse-ear cress).